Consider the following 445-residue polypeptide: Guanosine nucleotide diphosphate dissociation inhibitor 1 (445 aa).

The protein belongs to the Rab GDI family. As to quaternary structure, interacts with the GDP-bound form of RABA5C (via C-terminus). As to expression, expressed in roots, rosette leaves, stems, floral buds and siliques.

Its function is as follows. Regulates the GDP/GTP exchange reaction of most RAB proteins by inhibiting the dissociation of GDP from them, and the subsequent binding of GTP. The protein is Guanosine nucleotide diphosphate dissociation inhibitor 1 (GDI1) of Arabidopsis thaliana (Mouse-ear cress).